A 462-amino-acid chain; its full sequence is beta-Tubulin at 65B (462 aa).

GTP is bound by residues Glu-70, Ser-137, Gly-141, Thr-142, Gly-143, Asn-203, and Asn-225. Residue Glu-70 coordinates Mg(2+). The interval 420 to 462 (DYRSSAEGEDSGGGGGGGGGRSGSAESGEEEATPEAHCQYCTE) is disordered. Over residues 430–441 (SGGGGGGGGGRS) the composition is skewed to gly residues.

The protein belongs to the tubulin family. As to quaternary structure, dimer of alpha and beta chains. A typical microtubule is a hollow water-filled tube with an outer diameter of 25 nm and an inner diameter of 15 nM. Alpha-beta heterodimers associate head-to-tail to form protofilaments running lengthwise along the microtubule wall with the beta-tubulin subunit facing the microtubule plus end conferring a structural polarity. Microtubules usually have 13 protofilaments but different protofilament numbers can be found in some organisms and specialized cells. It depends on Mg(2+) as a cofactor.

It localises to the cytoplasm. The protein localises to the cytoskeleton. In terms of biological role, tubulin is the major constituent of microtubules, a cylinder consisting of laterally associated linear protofilaments composed of alpha- and beta-tubulin heterodimers. Microtubules grow by the addition of GTP-tubulin dimers to the microtubule end, where a stabilizing cap forms. Below the cap, tubulin dimers are in GDP-bound state, owing to GTPase activity of alpha-tubulin. In Drosophila melanogaster (Fruit fly), this protein is beta-Tubulin at 65B.